The sequence spans 183 residues: Small ribosomal subunit protein uS4c (183 aa).

One can recognise an S4 RNA-binding domain in the interval 82-143 (MRLDNILFRL…KQRSKALIQN (62 aa)).

This sequence belongs to the universal ribosomal protein uS4 family. As to quaternary structure, part of the 30S ribosomal subunit. Contacts protein S5. The interaction surface between S4 and S5 is involved in control of translational fidelity.

The protein resides in the plastid. The protein localises to the chloroplast. Functionally, one of the primary rRNA binding proteins, it binds directly to 16S rRNA where it nucleates assembly of the body of the 30S subunit. With S5 and S12 plays an important role in translational accuracy. This chain is Small ribosomal subunit protein uS4c (rps4), found in Crocosmia sp. (strain Porto Alegre 034).